The sequence spans 477 residues: Protoporphyrinogen oxidase (477 aa).

Residues 9 to 14 (GGGISG), 34 to 35 (ES), tryptophan 42, 57 to 60 (GPRG), valine 257, alanine 449, and 454 to 456 (VAV) contribute to the FAD site.

The protein belongs to the protoporphyrinogen/coproporphyrinogen oxidase family. Protoporphyrinogen oxidase subfamily. As to quaternary structure, monomer. Homodimer. FAD serves as cofactor. Expressed in heart, brain, placenta, lung, liver, skeletal muscle, kidney and pancreas.

Its subcellular location is the mitochondrion inner membrane. It carries out the reaction protoporphyrinogen IX + 3 O2 = protoporphyrin IX + 3 H2O2. It participates in porphyrin-containing compound metabolism; protoporphyrin-IX biosynthesis; protoporphyrin-IX from protoporphyrinogen-IX: step 1/1. In terms of biological role, catalyzes the 6-electron oxidation of protoporphyrinogen-IX to form protoporphyrin-IX. The polypeptide is Protoporphyrinogen oxidase (PPOX) (Homo sapiens (Human)).